The following is a 184-amino-acid chain: Protein CPn_0803/CP_1068/CPj0803/CpB0832 (184 aa).

Belongs to the chlamydial CPn_0803/CT_584/TC_0873 family.

This Chlamydia pneumoniae (Chlamydophila pneumoniae) protein is Protein CPn_0803/CP_1068/CPj0803/CpB0832.